The following is a 321-amino-acid chain: Phospho-N-acetylmuramoyl-pentapeptide-transferase (321 aa).

A run of 10 helical transmembrane segments spans residues 1–21 (MIYV…PILI), 49–69 (TMGG…AIIF), 77–97 (ILLL…DYII), 112–132 (FLAQ…FNMI), 140–160 (IPFT…IVFW), 176–196 (GLAT…SFML), 200–220 (AVGT…IYNV), 225–245 (VFMG…VSIM), 250–270 (ISLI…ILQV), and 300–320 (VVSV…WIGV).

The protein belongs to the glycosyltransferase 4 family. MraY subfamily. The cofactor is Mg(2+).

Its subcellular location is the cell membrane. It catalyses the reaction UDP-N-acetyl-alpha-D-muramoyl-L-alanyl-gamma-D-glutamyl-L-lysyl-D-alanyl-D-alanine + di-trans,octa-cis-undecaprenyl phosphate = Mur2Ac(oyl-L-Ala-gamma-D-Glu-L-Lys-D-Ala-D-Ala)-di-trans,octa-cis-undecaprenyl diphosphate + UMP. It participates in cell wall biogenesis; peptidoglycan biosynthesis. In terms of biological role, catalyzes the initial step of the lipid cycle reactions in the biosynthesis of the cell wall peptidoglycan: transfers peptidoglycan precursor phospho-MurNAc-pentapeptide from UDP-MurNAc-pentapeptide onto the lipid carrier undecaprenyl phosphate, yielding undecaprenyl-pyrophosphoryl-MurNAc-pentapeptide, known as lipid I. The chain is Phospho-N-acetylmuramoyl-pentapeptide-transferase from Staphylococcus carnosus (strain TM300).